A 411-amino-acid chain; its full sequence is Phospholipase ABHD3 (411 aa).

A helical; Signal-anchor for type II membrane protein membrane pass occupies residues 25 to 45; it reads VGFFGSGVGFSLILGFSVAYA. The region spanning 140–247 is the AB hydrolase-1 domain; it reads PTVLLLPGLT…PLKAAATFSV (108 aa). Active-site charge relay system residues include Ser220, Asp346, and His375.

This sequence belongs to the AB hydrolase superfamily. AB hydrolase 4 family.

The protein localises to the membrane. It catalyses the reaction a 1,2-diacyl-sn-glycero-3-phosphocholine + H2O = a 1-acyl-sn-glycero-3-phosphocholine + a fatty acid + H(+). The catalysed reaction is a 1,2-diacyl-sn-glycero-3-phosphocholine + H2O = a 2-acyl-sn-glycero-3-phosphocholine + a fatty acid + H(+). It carries out the reaction 1-tetradecanoyl-2-(9Z,12Z-octadecadienoyl)-sn-glycero-3-phosphocholine + H2O = 2-(9Z,12Z-octadecadienoyl)-sn-glycero-3-phosphocholine + tetradecanoate + H(+). The enzyme catalyses 1-tetradecanoyl-2-(9Z,12Z-octadecadienoyl)-sn-glycero-3-phosphocholine + H2O = 1-tetradecanoyl-sn-glycero-3-phosphocholine + (9Z,12Z)-octadecadienoate + H(+). It catalyses the reaction 1-tetradecanoyl-2-(5Z,8Z,11Z,14Z-eicosatetraenoyl)-sn-glycero-3-phosphocholine + H2O = 2-(5Z,8Z,11Z,14Z)-eicosatetraenoyl-sn-glycero-3-phosphocholine + tetradecanoate + H(+). The catalysed reaction is 1-tetradecanoyl-2-(4Z,7Z,10Z,13Z,16Z,19Z-docosahexaenoyl)-sn-glycero-3-phosphocholine + H2O = 2-(4Z,7Z,10Z,13Z,16Z,19Z-docosahexaenoyl)-sn-glycero-3-phosphocholine + tetradecanoate + H(+). It carries out the reaction 1,2-ditetradecanoyl-sn-glycero-3-phosphocholine + H2O = 2-tetradecanoyl-sn-glycero-3-phosphocholine + tetradecanoate + H(+). The enzyme catalyses 1-octadecanoyl-2-acetyl-sn-glycero-3-phosphocholine + H2O = 1-octadecanoyl-sn-glycero-3-phosphocholine + acetate + H(+). It catalyses the reaction 1,2-ditetradecanoyl-sn-glycero-3-phosphocholine + H2O = 1-tetradecanoyl-sn-glycero-3-phosphocholine + tetradecanoate + H(+). The catalysed reaction is 1-octadecanoyl-2-pentanoyl-sn-glycero-3-phosphocholine + H2O = pentanoate + 1-octadecanoyl-sn-glycero-3-phosphocholine + H(+). It carries out the reaction 1-octadecanoyl-2-hexanoyl-sn-glycero-3-phosphocholine + H2O = hexanoate + 1-octadecanoyl-sn-glycero-3-phosphocholine + H(+). The enzyme catalyses 1-octadecanoyl-2-octanoyl-sn-glycero-3-phosphocholine + H2O = 1-octadecanoyl-sn-glycero-3-phosphocholine + octanoate + H(+). It catalyses the reaction 1-octadecanoyl-2-nonanoyl-sn-glycero-3-phosphocholine + H2O = nonanoate + 1-octadecanoyl-sn-glycero-3-phosphocholine + H(+). The catalysed reaction is 1-O-hexadecyl-2-nonadioyl-sn-glycero-3-phosphocholine + H2O = nonanedioate + 1-O-hexadecyl-sn-glycero-3-phosphocholine + H(+). It carries out the reaction 1-hexadecanoyl-2-nonadioyl-sn-glycero-3-phosphocholine + H2O = nonanedioate + 1-hexadecanoyl-sn-glycero-3-phosphocholine + H(+). The enzyme catalyses 1-hexadecanoyl-2-(9-oxononanoyl)-sn-glycero-3-phosphocholine + H2O = 9-oxononanoate + 1-hexadecanoyl-sn-glycero-3-phosphocholine + H(+). It catalyses the reaction 1-hexadecanoyl-2-(5-oxopentanoyl)-sn-glycero-3-phosphocholine + H2O = 5-oxopentanoate + 1-hexadecanoyl-sn-glycero-3-phosphocholine + H(+). The catalysed reaction is 1-hexadecanoyl-2-glutaroyl-sn-glycero-3-phosphocholine + H2O = glutarate + 1-hexadecanoyl-sn-glycero-3-phosphocholine + H(+). It carries out the reaction 1-O-hexadecyl-2-acetyl-sn-glycero-3-phosphocholine + H2O = 1-O-hexadecyl-sn-glycero-3-phosphocholine + acetate + H(+). In terms of biological role, phospholipase that may play a role in phospholipids remodeling. May selectively cleave myristate (C14)-containing phosphatidylcholines through its predominant phospholipase 1 activity, cleaving preferentially acyl groups in sn1 position. In parallel, may have a minor phospholipase 2 activity acting on acyl groups in position sn2. In addition to (C14)-containing phosphatidylcholines, may also act on other medium-chain-containing and oxidatively truncated phospholipids. In Bos taurus (Bovine), this protein is Phospholipase ABHD3.